The following is a 342-amino-acid chain: Dihydroorotase (342 aa).

Residues histidine 13 and histidine 15 each coordinate Zn(2+). Residues 15–17 (HLR) and asparagine 41 contribute to the substrate site. Zn(2+) is bound by residues lysine 98, histidine 135, and histidine 173. Lysine 98 carries the post-translational modification N6-carboxylysine. Substrate is bound at residue histidine 135. Residue leucine 218 participates in substrate binding. Aspartate 246 lines the Zn(2+) pocket. Aspartate 246 is an active-site residue. 2 residues coordinate substrate: histidine 250 and alanine 262.

This sequence belongs to the metallo-dependent hydrolases superfamily. DHOase family. Class II DHOase subfamily. Homodimer. The cofactor is Zn(2+).

It catalyses the reaction (S)-dihydroorotate + H2O = N-carbamoyl-L-aspartate + H(+). The protein operates within pyrimidine metabolism; UMP biosynthesis via de novo pathway; (S)-dihydroorotate from bicarbonate: step 3/3. Functionally, catalyzes the reversible cyclization of carbamoyl aspartate to dihydroorotate. This is Dihydroorotase from Vibrio vulnificus (strain CMCP6).